Reading from the N-terminus, the 77-residue chain is Spermatid-specific protein T2 (77 aa).

A hydrophobic region spans residues Met-1–Gly-21. Positions Met-1–Arg-77 are disordered. Over residues Gly-20–Arg-77 the composition is skewed to basic residues.

In terms of processing, phosphorylation occurs at different degrees. The triphosphorylated form may be predominant in T2. SP2 appears to be phosphorylated in elongated spermatids, but dephosphorylated in mature sperm cells. As to expression, testis.

It is found in the nucleus. It localises to the chromosome. Functionally, cuttlefish spermiogenesis is characterized by a double nuclear protein transition: histones -&gt; spermatid-specific proteins (T1/T2) -&gt; protamines (SP1/SP2). The protamines compact sperm DNA into a highly condensed, stable and inactive complex. The protein is Spermatid-specific protein T2 of Sepia officinalis (Common cuttlefish).